Here is a 304-residue protein sequence, read N- to C-terminus: Ribosomal protein L11 methyltransferase (304 aa).

Positions 155, 176, 198, and 239 each coordinate S-adenosyl-L-methionine.

This sequence belongs to the methyltransferase superfamily. PrmA family.

Its subcellular location is the cytoplasm. The enzyme catalyses L-lysyl-[protein] + 3 S-adenosyl-L-methionine = N(6),N(6),N(6)-trimethyl-L-lysyl-[protein] + 3 S-adenosyl-L-homocysteine + 3 H(+). Functionally, methylates ribosomal protein L11. The chain is Ribosomal protein L11 methyltransferase from Caldicellulosiruptor bescii (strain ATCC BAA-1888 / DSM 6725 / KCTC 15123 / Z-1320) (Anaerocellum thermophilum).